A 360-amino-acid chain; its full sequence is GTPase Obg (360 aa).

An Obg domain is found at 1-156; the sequence is MFVDSVEIII…KCVRLELKLI (156 aa). Positions 157-360 constitute an OBG-type G domain; the sequence is ADIGLVGFPN…LKFVLLEALP (204 aa). Residues 163-170, 188-192, 210-213, 279-282, and 341-343 each bind GTP; these read GFPNAGKS, FTTLV, DIPG, NKCD, and SAV. Positions 170 and 190 each coordinate Mg(2+).

The protein belongs to the TRAFAC class OBG-HflX-like GTPase superfamily. OBG GTPase family. Monomer. The cofactor is Mg(2+).

It is found in the cytoplasm. Functionally, an essential GTPase which binds GTP, GDP and possibly (p)ppGpp with moderate affinity, with high nucleotide exchange rates and a fairly low GTP hydrolysis rate. Plays a role in control of the cell cycle, stress response, ribosome biogenesis and in those bacteria that undergo differentiation, in morphogenesis control. The chain is GTPase Obg from Helicobacter pylori (strain HPAG1).